We begin with the raw amino-acid sequence, 122 residues long: Large ribosomal subunit protein uL14 (122 aa).

Belongs to the universal ribosomal protein uL14 family. As to quaternary structure, part of the 50S ribosomal subunit. Forms a cluster with proteins L3 and L19. In the 70S ribosome, L14 and L19 interact and together make contacts with the 16S rRNA in bridges B5 and B8.

Functionally, binds to 23S rRNA. Forms part of two intersubunit bridges in the 70S ribosome. In Streptomyces avermitilis (strain ATCC 31267 / DSM 46492 / JCM 5070 / NBRC 14893 / NCIMB 12804 / NRRL 8165 / MA-4680), this protein is Large ribosomal subunit protein uL14.